The chain runs to 384 residues: Dual specificity protein phosphatase 5 (384 aa).

A Rhodanese domain is found at 19-141; sequence AAARCVVLDC…FYSEYPECCV (123 aa). Residues 53-74 carry the Nuclear localization signal motif; that stretch reads RRARGGAVSARYVLPDEAARAR. Residues 178-319 enclose the Tyrosine-protein phosphatase domain; that stretch reads GPVEILPFLY…LLQYESEILP (142 aa). Catalysis depends on Cys263, which acts as the Phosphocysteine intermediate.

It belongs to the protein-tyrosine phosphatase family. Non-receptor class dual specificity subfamily.

Its subcellular location is the nucleus. It carries out the reaction O-phospho-L-tyrosyl-[protein] + H2O = L-tyrosyl-[protein] + phosphate. The enzyme catalyses O-phospho-L-seryl-[protein] + H2O = L-seryl-[protein] + phosphate. The catalysed reaction is O-phospho-L-threonyl-[protein] + H2O = L-threonyl-[protein] + phosphate. Its function is as follows. Dual specificity protein phosphatase; active with phosphotyrosine, phosphoserine and phosphothreonine residues. The highest relative activity is toward ERK1. This Homo sapiens (Human) protein is Dual specificity protein phosphatase 5 (DUSP5).